The following is a 172-amino-acid chain: Adenine phosphoribosyltransferase (172 aa).

Belongs to the purine/pyrimidine phosphoribosyltransferase family. As to quaternary structure, homodimer.

Its subcellular location is the cytoplasm. The enzyme catalyses AMP + diphosphate = 5-phospho-alpha-D-ribose 1-diphosphate + adenine. It functions in the pathway purine metabolism; AMP biosynthesis via salvage pathway; AMP from adenine: step 1/1. In terms of biological role, catalyzes a salvage reaction resulting in the formation of AMP, that is energically less costly than de novo synthesis. This Prochlorococcus marinus (strain NATL1A) protein is Adenine phosphoribosyltransferase.